A 288-amino-acid polypeptide reads, in one-letter code: Glandicoline B O-methyltransferase roqN (288 aa).

Residues Thr-57, Asp-82, and 109-110 (DA) contribute to the S-adenosyl-L-methionine site.

This sequence belongs to the class I-like SAM-binding methyltransferase superfamily.

The catalysed reaction is glandicoline B + S-adenosyl-L-methionine = meleagrin + S-adenosyl-L-homocysteine + H(+). It participates in alkaloid biosynthesis. Its function is as follows. Glandicoline B O-methyltransferase; part of the gene cluster that mediates the biosynthesis of the mycotoxin meleagrin. The first stage is catalyzed by the dipeptide synthase roqA which condenses histidine and tryptophan to produce histidyltryptophanyldiketopiperazine (HTD). HTD is then converted to roquefortine C through two possible pathways. In the first pathway, prenyltransferase roqD transforms HTD to the intermediate roquefortine D, which is in turn converted to roquefortine C by the cytochrome P450 monooxygenase roqR. In the second pathway, HTD is first converted to the intermediate dehydrohistidyltryptophanyldi-ketopiperazine (DHTD) by roqR which is then prenylated by roqD to form roquefortine C. Roquefortine C can be further transformed to meleagrin via three more reactions including oxydation to glandicolin A by roqM, which is further reduced to glandicoline B by roqO. Finally, glandicoline B is converted to meleagrin by the glandicoline B O-methyltransferase roqN. More studies identified further branching and additional metabolites produced by the roquefortine/meleagrin cluster, including roquefortine F, roquefortine L, roquefortine M, roquefortine N and neoxaline. The chain is Glandicoline B O-methyltransferase roqN from Penicillium rubens (strain ATCC 28089 / DSM 1075 / NRRL 1951 / Wisconsin 54-1255) (Penicillium chrysogenum).